The chain runs to 186 residues: Probable GTP-binding protein EngB (186 aa).

Positions 18–186 constitute an EngB-type G domain; the sequence is DKKEICFIGR…LKKLIGSVIL (169 aa). Residues 26 to 33, 52 to 56, 69 to 72, 135 to 138, and 166 to 168 contribute to the GTP site; these read GRSNVGKS, GRTQL, DLPG, NKAD, and VSA. Residues Ser-33 and Thr-54 each coordinate Mg(2+).

It belongs to the TRAFAC class TrmE-Era-EngA-EngB-Septin-like GTPase superfamily. EngB GTPase family. Mg(2+) serves as cofactor.

In terms of biological role, necessary for normal cell division and for the maintenance of normal septation. The protein is Probable GTP-binding protein EngB of Malacoplasma penetrans (strain HF-2) (Mycoplasma penetrans).